The sequence spans 234 residues: Sugar fermentation stimulation protein A (234 aa).

A DNA-binding region (H-T-H motif) is located at residues 201 to 220; it reads LLSEAQNKGVEVLAYKAELS.

Belongs to the SfsA family.

Functionally, binds to DNA non-specifically. Could be a regulatory factor involved in maltose metabolism. This Salmonella dublin (strain CT_02021853) protein is Sugar fermentation stimulation protein A.